Reading from the N-terminus, the 217-residue chain is MOB kinase activator 3A (217 aa).

Residues C83, C88, H165, and H170 each contribute to the Zn(2+) site.

It belongs to the MOB1/phocein family.

May regulate the activity of kinases. The protein is MOB kinase activator 3A (MOB3A) of Homo sapiens (Human).